A 330-amino-acid chain; its full sequence is Glycerol-3-phosphate dehydrogenase [NAD(P)+] (330 aa).

Positions 13, 33, and 103 each coordinate NADPH. Sn-glycerol 3-phosphate is bound by residues Lys-103, Gly-131, and Thr-133. Ala-135 contacts NADPH. 5 residues coordinate sn-glycerol 3-phosphate: Lys-186, Asp-239, Ser-249, Arg-250, and Asn-251. Lys-186 (proton acceptor) is an active-site residue. NADPH is bound at residue Arg-250. NADPH-binding residues include Val-274 and Glu-276.

It belongs to the NAD-dependent glycerol-3-phosphate dehydrogenase family.

The protein resides in the cytoplasm. It catalyses the reaction sn-glycerol 3-phosphate + NAD(+) = dihydroxyacetone phosphate + NADH + H(+). The enzyme catalyses sn-glycerol 3-phosphate + NADP(+) = dihydroxyacetone phosphate + NADPH + H(+). Its pathway is membrane lipid metabolism; glycerophospholipid metabolism. Catalyzes the reduction of the glycolytic intermediate dihydroxyacetone phosphate (DHAP) to sn-glycerol 3-phosphate (G3P), the key precursor for phospholipid synthesis. This chain is Glycerol-3-phosphate dehydrogenase [NAD(P)+], found in Erythrobacter litoralis (strain HTCC2594).